Reading from the N-terminus, the 426-residue chain is Serine--tRNA ligase (426 aa).

Residues 41 to 60 show a composition bias toward polar residues; it reads QTRTEQLQAERNARSKSIGQ. The disordered stretch occupies residues 41 to 64; that stretch reads QTRTEQLQAERNARSKSIGQAKQR. 233 to 235 contributes to the L-serine binding site; that stretch reads TAE. 264–266 is a binding site for ATP; the sequence is RSE. Glu287 lines the L-serine pocket. 351-354 provides a ligand contact to ATP; sequence EISS. Position 387 (Ser387) interacts with L-serine.

It belongs to the class-II aminoacyl-tRNA synthetase family. Type-1 seryl-tRNA synthetase subfamily. In terms of assembly, homodimer. The tRNA molecule binds across the dimer.

The protein localises to the cytoplasm. The enzyme catalyses tRNA(Ser) + L-serine + ATP = L-seryl-tRNA(Ser) + AMP + diphosphate + H(+). It carries out the reaction tRNA(Sec) + L-serine + ATP = L-seryl-tRNA(Sec) + AMP + diphosphate + H(+). It functions in the pathway aminoacyl-tRNA biosynthesis; selenocysteinyl-tRNA(Sec) biosynthesis; L-seryl-tRNA(Sec) from L-serine and tRNA(Sec): step 1/1. Catalyzes the attachment of serine to tRNA(Ser). Is also able to aminoacylate tRNA(Sec) with serine, to form the misacylated tRNA L-seryl-tRNA(Sec), which will be further converted into selenocysteinyl-tRNA(Sec). The chain is Serine--tRNA ligase from Pseudomonas fluorescens (strain ATCC BAA-477 / NRRL B-23932 / Pf-5).